The primary structure comprises 218 residues: Small ribosomal subunit protein uS3c (218 aa).

The 76-residue stretch at 43 to 118 folds into the KH type-2 domain; that stretch reads IKNYVQKNPR…RLNIAIARIS (76 aa).

The protein belongs to the universal ribosomal protein uS3 family. As to quaternary structure, part of the 30S ribosomal subunit.

The protein localises to the plastid. The protein resides in the chloroplast. This is Small ribosomal subunit protein uS3c (rps3) from Acorus calamus (Sweet flag).